A 137-amino-acid chain; its full sequence is Nucleoside diphosphate kinase (137 aa).

Lysine 9, phenylalanine 57, arginine 85, threonine 91, arginine 102, and asparagine 112 together coordinate ATP. Histidine 115 functions as the Pros-phosphohistidine intermediate in the catalytic mechanism.

The protein belongs to the NDK family. In terms of assembly, homotetramer. Requires Mg(2+) as cofactor.

Its subcellular location is the cytoplasm. The enzyme catalyses a 2'-deoxyribonucleoside 5'-diphosphate + ATP = a 2'-deoxyribonucleoside 5'-triphosphate + ADP. It catalyses the reaction a ribonucleoside 5'-diphosphate + ATP = a ribonucleoside 5'-triphosphate + ADP. Its function is as follows. Major role in the synthesis of nucleoside triphosphates other than ATP. The ATP gamma phosphate is transferred to the NDP beta phosphate via a ping-pong mechanism, using a phosphorylated active-site intermediate. The sequence is that of Nucleoside diphosphate kinase from Campylobacter fetus subsp. fetus (strain 82-40).